The following is a 612-amino-acid chain: Cytokine-like nuclear factor N-PAC (612 aa).

The 60-residue stretch at Pro-22–Pro-81 folds into the PWWP domain. Residues Ala-168–Arg-270 are disordered. Low complexity-rich tracts occupy residues Ser-177–Ser-193 and Ala-201–Ser-220. Positions Ala-228–Leu-240 are enriched in polar residues. Residues Asp-276 to Leu-279 are interaction with histone H3. The tract at residues Arg-319–Phe-612 is dehydrogenase domain. NAD(+) is bound by residues Gly-329 to Asp-343, Thr-421, and Arg-564.

This sequence belongs to the HIBADH-related family. NP60 subfamily. In terms of assembly, binds to mononucleosomes. Interacts with male-specific lethal (MSL) histone acetyltransferase complex at least composed of mof, msl-1, msl-2 and msl-3.

The protein resides in the chromosome. In terms of biological role, nucleosome-destabilizing factor that is recruited to genes during transcriptional activation and colocalizes with a subset of trimethylated 'Lys-36' histone H3 (H3K36me3)-enriched regions. Binds DNA (in vitro). Facilitates Pol II transcription through nucleosomes. Facilitates male-specific lethal (MSL) histone acetyltransferase complex targeting to active genes on the X chromosome. Stimulates the acetylation of 'Lys-56' of nucleosomal histone H3 (H3K56ac) by nej. The polypeptide is Cytokine-like nuclear factor N-PAC (Drosophila pseudoobscura pseudoobscura (Fruit fly)).